A 637-amino-acid chain; its full sequence is Biosynthetic arginine decarboxylase (637 aa).

At K101 the chain carries N6-(pyridoxal phosphate)lysine. 286-296 (FDVGGGLAVDY) is a binding site for substrate.

This sequence belongs to the Orn/Lys/Arg decarboxylase class-II family. SpeA subfamily. Requires Mg(2+) as cofactor. The cofactor is pyridoxal 5'-phosphate.

It catalyses the reaction L-arginine + H(+) = agmatine + CO2. Its pathway is amine and polyamine biosynthesis; agmatine biosynthesis; agmatine from L-arginine: step 1/1. In terms of biological role, catalyzes the biosynthesis of agmatine from arginine. This Shewanella putrefaciens (strain CN-32 / ATCC BAA-453) protein is Biosynthetic arginine decarboxylase.